Here is a 382-residue protein sequence, read N- to C-terminus: Lipid-A-disaccharide synthase (382 aa).

It belongs to the LpxB family.

The catalysed reaction is a lipid X + a UDP-2-N,3-O-bis[(3R)-3-hydroxyacyl]-alpha-D-glucosamine = a lipid A disaccharide + UDP + H(+). It participates in bacterial outer membrane biogenesis; LPS lipid A biosynthesis. Condensation of UDP-2,3-diacylglucosamine and 2,3-diacylglucosamine-1-phosphate to form lipid A disaccharide, a precursor of lipid A, a phosphorylated glycolipid that anchors the lipopolysaccharide to the outer membrane of the cell. The chain is Lipid-A-disaccharide synthase from Dechloromonas aromatica (strain RCB).